The following is a 142-amino-acid chain: Large ribosomal subunit protein uL13 (142 aa).

It belongs to the universal ribosomal protein uL13 family. Part of the 50S ribosomal subunit.

In terms of biological role, this protein is one of the early assembly proteins of the 50S ribosomal subunit, although it is not seen to bind rRNA by itself. It is important during the early stages of 50S assembly. The sequence is that of Large ribosomal subunit protein uL13 from Citrobacter koseri (strain ATCC BAA-895 / CDC 4225-83 / SGSC4696).